We begin with the raw amino-acid sequence, 963 residues long: Importin-13 (963 aa).

HEAT repeat units follow at residues 24-54 (ESVE…QAQV), 56-88 (PQAW…KTSR), 95-135 (TDQY…LSMM), 142-179 (AVAD…EFQT), 194-231 (LAVE…SWVQ), 236-268 (LQDC…NAIS), 276-325 (VNTL…ALLD), 330-372 (WQSF…DDIL), 375-438 (EAEK…YEML), 440-476 (AELL…FQSI), 487-522 (VVPG…WLAD), 524-558 (PVMI…CREC), 562-600 (LPPY…LLSA), 603-648 (VEEI…SNLF), 676-716 (PVVV…VKTL), 720-754 (FAPM…VHIF), 761-803 (FPPI…ALKR), 815-845 (VKAV…TELL), 860-893 (EDGR…FALN), and 897-931 (FSLL…QQIL). Positions 45–111 (AQKWLMQAQV…KAQLFTQITR (67 aa)) constitute an Importin N-terminal domain.

This sequence belongs to the importin beta family. As to quaternary structure, interacts with UBC9, RAN, RBM8A, eIF-1A and PAX6.

It localises to the cytoplasm. Its subcellular location is the nucleus. Functionally, functions in nuclear protein import as nuclear transport receptor. Serves as receptor for nuclear localization signals (NLS) in cargo substrates. Is thought to mediate docking of the importin/substrate complex to the nuclear pore complex (NPC) through binding to nucleoporin and the complex is subsequently translocated through the pore by an energy requiring, Ran-dependent mechanism. At the nucleoplasmic side of the NPC, Ran binds to the importin, the importin/substrate complex dissociates and importin is re-exported from the nucleus to the cytoplasm where GTP hydrolysis releases Ran. The directionality of nuclear import is thought to be conferred by an asymmetric distribution of the GTP- and GDP-bound forms of Ran between the cytoplasm and nucleus. Mediates the nuclear import of UBC9, the RBM8A/MAGOH complex, PAX6 and probably other members of the paired homeobox family. Also mediates nuclear export of eIF-1A, and the cytoplasmic release of eIF-1A is triggered by the loading of import substrates onto IPO13. The sequence is that of Importin-13 (IPO13) from Pongo abelii (Sumatran orangutan).